A 286-amino-acid chain; its full sequence is Pantothenate synthetase (286 aa).

Residue 31 to 38 (MGALHEGH) participates in ATP binding. His38 functions as the Proton donor in the catalytic mechanism. Gln65 is a binding site for (R)-pantoate. A beta-alanine-binding site is contributed by Gln65. 153-156 (GEKD) provides a ligand contact to ATP. A (R)-pantoate-binding site is contributed by Gln159. ATP is bound at residue 190 to 193 (LSSR).

The protein belongs to the pantothenate synthetase family. As to quaternary structure, homodimer.

It is found in the cytoplasm. It carries out the reaction (R)-pantoate + beta-alanine + ATP = (R)-pantothenate + AMP + diphosphate + H(+). Its pathway is cofactor biosynthesis; (R)-pantothenate biosynthesis; (R)-pantothenate from (R)-pantoate and beta-alanine: step 1/1. Catalyzes the condensation of pantoate with beta-alanine in an ATP-dependent reaction via a pantoyl-adenylate intermediate. The protein is Pantothenate synthetase of Corynebacterium diphtheriae (strain ATCC 700971 / NCTC 13129 / Biotype gravis).